Consider the following 440-residue polypeptide: Protein translocase subunit SecY (440 aa).

The next 10 helical transmembrane spans lie at 17–37, 74–94, 116–135, 155–175, 178–198, 213–233, 270–290, 316–336, 374–394, and 403–423; these read IFFT…PSPG, IFAI…LLTV, YTRY…IVAL, FFDL…VMWM, LITE…GIAT, GVVF…VVFV, VIPV…TQIV, WQYI…YVSV, LLFV…IMLD, and GATP…LTTV.

The protein belongs to the SecY/SEC61-alpha family. Component of the Sec protein translocase complex. Heterotrimer consisting of SecY, SecE and SecG subunits. The heterotrimers can form oligomers, although 1 heterotrimer is thought to be able to translocate proteins. Interacts with the ribosome. Interacts with SecDF, and other proteins may be involved. Interacts with SecA.

It is found in the cell membrane. Its function is as follows. The central subunit of the protein translocation channel SecYEG. Consists of two halves formed by TMs 1-5 and 6-10. These two domains form a lateral gate at the front which open onto the bilayer between TMs 2 and 7, and are clamped together by SecE at the back. The channel is closed by both a pore ring composed of hydrophobic SecY resides and a short helix (helix 2A) on the extracellular side of the membrane which forms a plug. The plug probably moves laterally to allow the channel to open. The ring and the pore may move independently. The protein is Protein translocase subunit SecY of Corynebacterium glutamicum (strain ATCC 13032 / DSM 20300 / JCM 1318 / BCRC 11384 / CCUG 27702 / LMG 3730 / NBRC 12168 / NCIMB 10025 / NRRL B-2784 / 534).